The sequence spans 233 residues: Small ribosomal subunit protein uS2 (233 aa).

It belongs to the universal ribosomal protein uS2 family.

The chain is Small ribosomal subunit protein uS2 from Clostridium botulinum (strain Hall / ATCC 3502 / NCTC 13319 / Type A).